The primary structure comprises 466 residues: 3-isopropylmalate dehydratase large subunit (466 aa).

Cysteine 347, cysteine 408, and cysteine 411 together coordinate [4Fe-4S] cluster.

The protein belongs to the aconitase/IPM isomerase family. LeuC type 1 subfamily. In terms of assembly, heterodimer of LeuC and LeuD. [4Fe-4S] cluster serves as cofactor.

The enzyme catalyses (2R,3S)-3-isopropylmalate = (2S)-2-isopropylmalate. Its pathway is amino-acid biosynthesis; L-leucine biosynthesis; L-leucine from 3-methyl-2-oxobutanoate: step 2/4. In terms of biological role, catalyzes the isomerization between 2-isopropylmalate and 3-isopropylmalate, via the formation of 2-isopropylmaleate. This Herminiimonas arsenicoxydans protein is 3-isopropylmalate dehydratase large subunit.